We begin with the raw amino-acid sequence, 1396 residues long: DNA ligase 6 (1396 aa).

Disordered regions lie at residues 441–464 and 562–599; these read KNACEDGGENVPSSRGPILHDTTP and MNLTKGTISPGKRGKSSGSKSNKKAKKDPKSKPVGPGQ. 2 consecutive short sequence motifs (nuclear localization signal) follow at residues 572-579 and 886-893; these read GKRGKSSG and LRKISVQT. Glu-1037 lines the ATP pocket. The N6-AMP-lysine intermediate role is filled by Lys-1039. The ATP site is built by Arg-1044, Arg-1060, Glu-1092, and Phe-1136. Glu-1092 serves as a coordination point for Mg(2+). Mg(2+) is bound at residue Glu-1207. Positions 1212, 1225, and 1231 each coordinate ATP.

The protein belongs to the ATP-dependent DNA ligase family. Requires Mg(2+) as cofactor. As to expression, mostly expressed in buds and flowers, and, to a lower extent, in stems, leaves, siliques and seeds.

Its subcellular location is the nucleus. The enzyme catalyses ATP + (deoxyribonucleotide)n-3'-hydroxyl + 5'-phospho-(deoxyribonucleotide)m = (deoxyribonucleotide)n+m + AMP + diphosphate.. Functionally, DNA ligase that seals nicks in double-stranded DNA during DNA replication, DNA recombination and DNA repair. Required to maintain seed viability (e.g. longevity and storability) and during seed germination, probably by repairing DNA damage accumulated during seed development, storage and/or imbibition. Facilitates seed germination in cold conditions (2 degrees Celsius) and under oxidative stress (e.g. menadione, a genotoxic agent). Involved in repair of X-ray-induced damage. Its function is as follows. Limits stable root transformation by A.tumefaciens T-DNA. This Arabidopsis thaliana (Mouse-ear cress) protein is DNA ligase 6.